A 305-amino-acid chain; its full sequence is Endonuclease III-like protein 1 (305 aa).

Residues 1–28 (MNAAGVRMVVTRARSRGTGASLRRRGEK) constitute a mitochondrion transit peptide. The segment at 1 to 83 (MNAAGVRMVV…HLQAPSWQPQ (83 aa)) is disordered. At S64 the chain carries Phosphoserine. The region spanning 192-216 (RYDGDIPASVAELVALPGVGPKMAH) is the HhH domain. The active-site Nucleophile; for N-glycosylase activity is the K213. C283, C290, C293, and C299 together coordinate [4Fe-4S] cluster.

This sequence belongs to the Nth/MutY family. Interacts with YBX1. Interacts with ERCC5/XPG; the interaction stimulates NTHL1 activity and NTHL1 binding to its DNA substrate. It depends on [4Fe-4S] cluster as a cofactor.

It localises to the nucleus. Its subcellular location is the mitochondrion. The catalysed reaction is 2'-deoxyribonucleotide-(2'-deoxyribose 5'-phosphate)-2'-deoxyribonucleotide-DNA = a 3'-end 2'-deoxyribonucleotide-(2,3-dehydro-2,3-deoxyribose 5'-phosphate)-DNA + a 5'-end 5'-phospho-2'-deoxyribonucleoside-DNA + H(+). Its function is as follows. Bifunctional DNA N-glycosylase with associated apurinic/apyrimidinic (AP) lyase function that catalyzes the first step in base excision repair (BER), the primary repair pathway for the repair of oxidative DNA damage. The DNA N-glycosylase activity releases the damaged DNA base from DNA by cleaving the N-glycosidic bond, leaving an AP site. The AP lyase activity cleaves the phosphodiester bond 3' to the AP site by a beta-elimination. Primarily recognizes and repairs oxidative base damage of pyrimidines. This chain is Endonuclease III-like protein 1, found in Bos taurus (Bovine).